The sequence spans 131 residues: Small ribosomal subunit protein uS8c (131 aa).

This sequence belongs to the universal ribosomal protein uS8 family. As to quaternary structure, part of the 30S ribosomal subunit.

Its subcellular location is the plastid. The protein localises to the chloroplast. Its function is as follows. One of the primary rRNA binding proteins, it binds directly to 16S rRNA central domain where it helps coordinate assembly of the platform of the 30S subunit. This chain is Small ribosomal subunit protein uS8c (rps8), found in Tupiella akineta (Green alga).